A 237-amino-acid polypeptide reads, in one-letter code: MTPQDFYRTLEEDGFSLSSKQKEQFDTYFKLLVEWNTKINLTAITEENEVYLKHFYDSIAPILQGFLANEPIKLLDIGAGAGFPSLPMKILFPNLEVTIIDSLNKRISFLTLLAQELGLENVHFFHGRAEDFGQDKAFRGQFDVVTARAVARMQVLSELTIPFLKIGGKLIALKAQAADQELEEAKNALCLLFGKVIKNHSYQLPNGDSRFITIVEKKKETPYKYPRKAGLPNKKPL.

S-adenosyl-L-methionine-binding positions include Gly-78, Phe-83, 129-130, and Arg-148; that span reads AE.

It belongs to the methyltransferase superfamily. RNA methyltransferase RsmG family.

It localises to the cytoplasm. Functionally, specifically methylates the N7 position of a guanine in 16S rRNA. The sequence is that of Ribosomal RNA small subunit methyltransferase G from Streptococcus pyogenes serotype M49 (strain NZ131).